Reading from the N-terminus, the 174-residue chain is Peptide deformylase (174 aa).

The Fe cation site is built by C96 and H138. E139 is a catalytic residue. Fe cation is bound at residue H142.

This sequence belongs to the polypeptide deformylase family. The cofactor is Fe(2+).

It catalyses the reaction N-terminal N-formyl-L-methionyl-[peptide] + H2O = N-terminal L-methionyl-[peptide] + formate. Functionally, removes the formyl group from the N-terminal Met of newly synthesized proteins. Requires at least a dipeptide for an efficient rate of reaction. N-terminal L-methionine is a prerequisite for activity but the enzyme has broad specificity at other positions. The chain is Peptide deformylase from Helicobacter pylori (strain J99 / ATCC 700824) (Campylobacter pylori J99).